We begin with the raw amino-acid sequence, 420 residues long: Glucose-1-phosphate adenylyltransferase (420 aa).

Alpha-D-glucose 1-phosphate-binding positions include Tyr-107, Gly-172, 187–188, and Ser-205; that span reads EK.

Belongs to the bacterial/plant glucose-1-phosphate adenylyltransferase family. In terms of assembly, homotetramer.

It catalyses the reaction alpha-D-glucose 1-phosphate + ATP + H(+) = ADP-alpha-D-glucose + diphosphate. It participates in glycan biosynthesis; glycogen biosynthesis. In terms of biological role, involved in the biosynthesis of ADP-glucose, a building block required for the elongation reactions to produce glycogen. Catalyzes the reaction between ATP and alpha-D-glucose 1-phosphate (G1P) to produce pyrophosphate and ADP-Glc. The polypeptide is Glucose-1-phosphate adenylyltransferase (Agrobacterium fabrum (strain C58 / ATCC 33970) (Agrobacterium tumefaciens (strain C58))).